The following is a 339-amino-acid chain: 5-dehydro-2-deoxygluconokinase (339 aa).

Belongs to the carbohydrate kinase PfkB family.

It carries out the reaction 5-dehydro-2-deoxy-D-gluconate + ATP = 6-phospho-5-dehydro-2-deoxy-D-gluconate + ADP + H(+). It participates in polyol metabolism; myo-inositol degradation into acetyl-CoA; acetyl-CoA from myo-inositol: step 5/7. Functionally, catalyzes the phosphorylation of 5-dehydro-2-deoxy-D-gluconate (2-deoxy-5-keto-D-gluconate or DKG) to 6-phospho-5-dehydro-2-deoxy-D-gluconate (DKGP). This is 5-dehydro-2-deoxygluconokinase from Clostridium botulinum (strain Alaska E43 / Type E3).